We begin with the raw amino-acid sequence, 150 residues long: 1,4-dihydroxy-2-naphthoyl-CoA hydrolase (150 aa).

The active site involves Asp19.

Belongs to the 4-hydroxybenzoyl-CoA thioesterase family. DHNA-CoA hydrolase subfamily.

The catalysed reaction is 1,4-dihydroxy-2-naphthoyl-CoA + H2O = 1,4-dihydroxy-2-naphthoate + CoA + H(+). The protein operates within cofactor biosynthesis; phylloquinone biosynthesis. Its pathway is quinol/quinone metabolism; 1,4-dihydroxy-2-naphthoate biosynthesis; 1,4-dihydroxy-2-naphthoate from chorismate: step 7/7. Functionally, catalyzes the hydrolysis of 1,4-dihydroxy-2-naphthoyl-CoA (DHNA-CoA) to 1,4-dihydroxy-2-naphthoate (DHNA), a reaction involved in phylloquinone (vitamin K1) biosynthesis. This chain is 1,4-dihydroxy-2-naphthoyl-CoA hydrolase, found in Prochlorococcus marinus subsp. pastoris (strain CCMP1986 / NIES-2087 / MED4).